Consider the following 353-residue polypeptide: Phospho-N-acetylmuramoyl-pentapeptide-transferase (353 aa).

Transmembrane regions (helical) follow at residues 24 to 44 (LGFFIAFFLTLFLMPKFILWA), 66 to 86 (TPTMGGIVFVFATIVASVLCA), 88 to 108 (LGNLYVLLGMIVLVGFSFVGF), 129 to 149 (FGMLFVLSLVVSVLLSLKGLD), 160 to 180 (PLFEMPTILAVGFWVLVFLST), 192 to 212 (GLASVPSIFTLLSLSIFVYVA), 229 to 249 (VGELFVISLALVGSLFGFLWY), 256 to 276 (VFMGDSGSLALGGFIAYNAIV), 281 to 301 (ILLVLMGLIFVVETLSVILQV), and 330 to 350 (KVIVRFWIISMLSNLVALLSL).

The protein belongs to the glycosyltransferase 4 family. MraY subfamily. Mg(2+) serves as cofactor.

It localises to the cell inner membrane. It carries out the reaction UDP-N-acetyl-alpha-D-muramoyl-L-alanyl-gamma-D-glutamyl-meso-2,6-diaminopimeloyl-D-alanyl-D-alanine + di-trans,octa-cis-undecaprenyl phosphate = di-trans,octa-cis-undecaprenyl diphospho-N-acetyl-alpha-D-muramoyl-L-alanyl-D-glutamyl-meso-2,6-diaminopimeloyl-D-alanyl-D-alanine + UMP. It functions in the pathway cell wall biogenesis; peptidoglycan biosynthesis. Functionally, catalyzes the initial step of the lipid cycle reactions in the biosynthesis of the cell wall peptidoglycan: transfers peptidoglycan precursor phospho-MurNAc-pentapeptide from UDP-MurNAc-pentapeptide onto the lipid carrier undecaprenyl phosphate, yielding undecaprenyl-pyrophosphoryl-MurNAc-pentapeptide, known as lipid I. The sequence is that of Phospho-N-acetylmuramoyl-pentapeptide-transferase from Helicobacter pylori (strain Shi470).